An 82-amino-acid polypeptide reads, in one-letter code: Small ribosomal subunit protein uS17 (82 aa).

It belongs to the universal ribosomal protein uS17 family. In terms of assembly, part of the 30S ribosomal subunit.

One of the primary rRNA binding proteins, it binds specifically to the 5'-end of 16S ribosomal RNA. This chain is Small ribosomal subunit protein uS17, found in Shewanella sediminis (strain HAW-EB3).